Reading from the N-terminus, the 304-residue chain is Acetaldehyde dehydrogenase (304 aa).

C131 acts as the Acyl-thioester intermediate in catalysis. Residues 162-170 and N273 contribute to the NAD(+) site; that span reads SAGPGTRKN.

Belongs to the acetaldehyde dehydrogenase family.

It catalyses the reaction acetaldehyde + NAD(+) + CoA = acetyl-CoA + NADH + H(+). This is Acetaldehyde dehydrogenase from Polaromonas naphthalenivorans (strain CJ2).